The sequence spans 418 residues: STE20-related kinase adapter protein beta (418 aa).

Residues 58–369 form the Protein kinase domain; it reads YELQVEIGRG…ASSLLSHVFF (312 aa). Residues 64 to 72 and Lys-89 each bind ATP; that span reads IGRGFDNLT.

The protein belongs to the protein kinase superfamily. STE Ser/Thr protein kinase family. STE20 subfamily. As to quaternary structure, component of a trimeric complex composed of STK11/LKB1, STRAD (STRADA or STRADB) and CAB39/MO25 (CAB39/MO25alpha or CAB39L/MO25beta): the complex tethers STK11/LKB1 in the cytoplasm and stimulates its catalytic activity. Interacts with BIRC4/XIAP. These two proteins are likely to coexist in a complex with TAK1, TRAF6, TAB1 and TAB2.

Its subcellular location is the nucleus. The protein localises to the cytoplasm. Functionally, pseudokinase which, in complex with CAB39/MO25 (CAB39/MO25alpha or CAB39L/MO25beta), binds to and activates STK11/LKB1. Adopts a closed conformation typical of active protein kinases and binds STK11/LKB1 as a pseudosubstrate, promoting conformational change of STK11/LKB1 in an active conformation. This chain is STE20-related kinase adapter protein beta (Stradb), found in Mus musculus (Mouse).